Consider the following 522-residue polypeptide: Apolipoprotein N-acyltransferase (522 aa).

6 helical membrane passes run 17–37 (YFTY…FSPF), 61–81 (TALL…VSWL), 98–118 (FLVG…TYLV), 127–147 (VIFA…FTGF), 164–184 (IAPI…SAVI), and 197–217 (LKLV…SAYS). The CN hydrolase domain occupies 236-483 (AQGNIEQNLK…ETTLTYKIAP (248 aa)). Residue Glu276 is the Proton acceptor of the active site. Lys342 is an active-site residue. Catalysis depends on Cys394, which acts as the Nucleophile. A helical membrane pass occupies residues 495–515 (NMPLYALSLLFLLLHSMMAFI).

The protein belongs to the CN hydrolase family. Apolipoprotein N-acyltransferase subfamily.

It localises to the cell inner membrane. It carries out the reaction N-terminal S-1,2-diacyl-sn-glyceryl-L-cysteinyl-[lipoprotein] + a glycerophospholipid = N-acyl-S-1,2-diacyl-sn-glyceryl-L-cysteinyl-[lipoprotein] + a 2-acyl-sn-glycero-3-phospholipid + H(+). Its pathway is protein modification; lipoprotein biosynthesis (N-acyl transfer). Catalyzes the phospholipid dependent N-acylation of the N-terminal cysteine of apolipoprotein, the last step in lipoprotein maturation. This Haemophilus influenzae (strain ATCC 51907 / DSM 11121 / KW20 / Rd) protein is Apolipoprotein N-acyltransferase.